Reading from the N-terminus, the 209-residue chain is Dof zinc finger protein DOF1.6 (209 aa).

Residues 1-17 (MPSEPNQTRPTRVQPST) are compositionally biased toward polar residues. Residues 1 to 29 (MPSEPNQTRPTRVQPSTAAYPPPNLAEPL) are disordered. Pro residues predominate over residues 20–29 (YPPPNLAEPL). The Dof-type zinc finger occupies 29–83 (LPCPRCNSTTTKFCYYNNYNLAQPRYYCKSCRRYWTQGGTLRDVPVGGGTRRSSS). Zn(2+) contacts are provided by Cys31, Cys34, Cys56, and Cys59. The disordered stretch occupies residues 70 to 116 (RDVPVGGGTRRSSSKRHRSFSTTATSSSSSSSVITTTTQEPATTEAS). The segment covering 89–116 (FSTTATSSSSSSSVITTTTQEPATTEAS) has biased composition (low complexity).

The protein localises to the nucleus. Its function is as follows. Transcription factor that binds specifically to a 5'-AA[AG]G-3' consensus core sequence. The chain is Dof zinc finger protein DOF1.6 (DOF1.6) from Arabidopsis thaliana (Mouse-ear cress).